The sequence spans 330 residues: Anthranilate phosphoribosyltransferase (330 aa).

5-phospho-alpha-D-ribose 1-diphosphate-binding positions include Gly77, 80 to 81, Thr85, 87 to 90, 105 to 113, and Ser117; these read GD, NIST, and KHGNKAVSS. An anthranilate-binding site is contributed by Gly77. Ser89 provides a ligand contact to Mg(2+). Asn108 is an anthranilate binding site. Arg163 is a binding site for anthranilate. Mg(2+) is bound by residues Asp222 and Glu223.

It belongs to the anthranilate phosphoribosyltransferase family. Homodimer. It depends on Mg(2+) as a cofactor.

It carries out the reaction N-(5-phospho-beta-D-ribosyl)anthranilate + diphosphate = 5-phospho-alpha-D-ribose 1-diphosphate + anthranilate. The protein operates within amino-acid biosynthesis; L-tryptophan biosynthesis; L-tryptophan from chorismate: step 2/5. Functionally, catalyzes the transfer of the phosphoribosyl group of 5-phosphorylribose-1-pyrophosphate (PRPP) to anthranilate to yield N-(5'-phosphoribosyl)-anthranilate (PRA). This chain is Anthranilate phosphoribosyltransferase, found in Pelagibacter ubique (strain HTCC1062).